The chain runs to 249 residues: Acetylglutamate kinase (249 aa).

Substrate is bound by residues 42-43, Arg64, and Asn155; that span reads GG.

This sequence belongs to the acetylglutamate kinase family. ArgB subfamily.

The protein resides in the cytoplasm. It carries out the reaction N-acetyl-L-glutamate + ATP = N-acetyl-L-glutamyl 5-phosphate + ADP. The protein operates within amino-acid biosynthesis; L-arginine biosynthesis; N(2)-acetyl-L-ornithine from L-glutamate: step 2/4. Catalyzes the ATP-dependent phosphorylation of N-acetyl-L-glutamate. This is Acetylglutamate kinase from Endomicrobium trichonymphae.